Consider the following 273-residue polypeptide: Ribosomal RNA small subunit methyltransferase A (273 aa).

Residues Asn18, Leu20, Gly45, Glu66, Asp91, and Asn113 each coordinate S-adenosyl-L-methionine.

This sequence belongs to the class I-like SAM-binding methyltransferase superfamily. rRNA adenine N(6)-methyltransferase family. RsmA subfamily.

Its subcellular location is the cytoplasm. It catalyses the reaction adenosine(1518)/adenosine(1519) in 16S rRNA + 4 S-adenosyl-L-methionine = N(6)-dimethyladenosine(1518)/N(6)-dimethyladenosine(1519) in 16S rRNA + 4 S-adenosyl-L-homocysteine + 4 H(+). Functionally, specifically dimethylates two adjacent adenosines (A1518 and A1519) in the loop of a conserved hairpin near the 3'-end of 16S rRNA in the 30S particle. May play a critical role in biogenesis of 30S subunits. In Salmonella typhimurium (strain LT2 / SGSC1412 / ATCC 700720), this protein is Ribosomal RNA small subunit methyltransferase A.